Consider the following 466-residue polypeptide: 3-isopropylmalate dehydratase large subunit (466 aa).

[4Fe-4S] cluster-binding residues include Cys347, Cys407, and Cys410.

This sequence belongs to the aconitase/IPM isomerase family. LeuC type 1 subfamily. As to quaternary structure, heterodimer of LeuC and LeuD. It depends on [4Fe-4S] cluster as a cofactor.

It catalyses the reaction (2R,3S)-3-isopropylmalate = (2S)-2-isopropylmalate. It functions in the pathway amino-acid biosynthesis; L-leucine biosynthesis; L-leucine from 3-methyl-2-oxobutanoate: step 2/4. Functionally, catalyzes the isomerization between 2-isopropylmalate and 3-isopropylmalate, via the formation of 2-isopropylmaleate. This Pectobacterium atrosepticum (strain SCRI 1043 / ATCC BAA-672) (Erwinia carotovora subsp. atroseptica) protein is 3-isopropylmalate dehydratase large subunit.